Consider the following 131-residue polypeptide: MSRIIALIISFLLVGCATPPMPAQRIVGEVRMSRPLSRTAHIDVSIFGLYEGKVREVQRTRFETGNLPLFFSIKLNPAQRGEGELYLRSTLSFPERGVQAVAQQKLIGKNKVVLQMIPKTCYPNCQSPNTR.

Residues 1–15 (MSRIIALIISFLLVG) form the signal peptide. Cys-16 carries N-palmitoyl cysteine lipidation. Cys-16 carries the S-diacylglycerol cysteine lipid modification.

It belongs to the ExsB/YscW family. Interacts with YscC/SctC.

It is found in the cell outer membrane. Functionally, involved in the synthesis of the type III secretion system (T3SS), also called injectisome, which is used to inject bacterial effector proteins into eukaryotic host cells. Pilot protein that is required for the proper localization of the secretin YscC/SctC in the outer membrane. Also required for efficient oligomerization of YscC/SctC and stabilization of the oligomers. The polypeptide is Type 3 secretion system pilotin (Yersinia enterocolitica).